Consider the following 122-residue polypeptide: Large ribosomal subunit protein uL14 (122 aa).

It belongs to the universal ribosomal protein uL14 family. In terms of assembly, part of the 50S ribosomal subunit. Forms a cluster with proteins L3 and L19. In the 70S ribosome, L14 and L19 interact and together make contacts with the 16S rRNA in bridges B5 and B8.

Binds to 23S rRNA. Forms part of two intersubunit bridges in the 70S ribosome. The chain is Large ribosomal subunit protein uL14 from Chlorobium phaeobacteroides (strain BS1).